A 943-amino-acid polypeptide reads, in one-letter code: Isoleucine--tRNA ligase 1 (943 aa).

The 'HIGH' region motif lies at 58-68 (PYANGTIHIGH). Position 567 (E567) interacts with L-isoleucyl-5'-AMP. A 'KMSKS' region motif is present at residues 608 to 612 (KMSKS). Residue K611 participates in ATP binding. Zn(2+)-binding residues include C906, C909, C926, and C929.

Belongs to the class-I aminoacyl-tRNA synthetase family. IleS type 1 subfamily. Monomer. It depends on Zn(2+) as a cofactor.

Its subcellular location is the cytoplasm. The catalysed reaction is tRNA(Ile) + L-isoleucine + ATP = L-isoleucyl-tRNA(Ile) + AMP + diphosphate. Catalyzes the attachment of isoleucine to tRNA(Ile). As IleRS can inadvertently accommodate and process structurally similar amino acids such as valine, to avoid such errors it has two additional distinct tRNA(Ile)-dependent editing activities. One activity is designated as 'pretransfer' editing and involves the hydrolysis of activated Val-AMP. The other activity is designated 'posttransfer' editing and involves deacylation of mischarged Val-tRNA(Ile). Functionally, confers resistance to the antibiotic mupirocin (pseudomonic acid A), an Ile-analog produced by P.fluorescens NCIMB 10586 itself that competitively inhibits activation by Ile-tRNA synthetase, thus inhibiting protein biosynthesis. This Pseudomonas fluorescens protein is Isoleucine--tRNA ligase 1 (ileS1).